Consider the following 468-residue polypeptide: Two-component response regulator-like APRR9 (468 aa).

The Response regulatory domain maps to 38-156; that stretch reads RVLLVESDYS…ELKNLWQHVW (119 aa). Polar residues-rich tracts occupy residues 168–177 and 194–203; these read HAQSLPASQH and DQGSGAQAIN. 3 disordered regions span residues 168 to 203, 302 to 416, and 442 to 468; these read HAQS…QAIN, VVAL…SRSQ, and RKKL…STKS. The segment covering 315 to 327 has biased composition (basic and acidic residues); sequence TPTESHEKLRKVT. Over residues 328 to 364 the composition is skewed to polar residues; it reads SDQGSATTSSNQENIGSSSVSFRNQVLQSTVTNQKQD. Composition is skewed to basic and acidic residues over residues 371–382 and 400–409; these read SNREKAASKEVE and EKPKEEESAK. Positions 417-459 constitute a CCT domain; sequence REAALMKFRLKRKDRCFDKKVRYQSRKKLAEQRPRVKGQFVRT. Residues 458–468 show a composition bias toward polar residues; it reads RTVNSDASTKS.

It belongs to the ARR-like family. In terms of processing, phosphorylated. Phosphorylation varies throughout the diurnal cycle.

The protein localises to the nucleus. In terms of biological role, transcriptional repressor of CCA1 and LHY, and positive regulator of LWD1 and LWD2 expression. Controls photoperiodic flowering response and temperature compensation. Involved in the positive and negative feedback loops of the circadian clock. Expression of several members of the ARR-like family is controlled by circadian rhythm. Regulated at the transcriptional level by a corepressor complex consisting of ELF4, ELF3, and LUX. APRR9, APRR7, and APRR5 coordinately act on the upstream region of the target genes to repress their expression from noon until midnight. The particular coordinated sequential expression of APRR9, APRR7, APRR5, APRR3 and APPR1 result to circadian waves that may be at the basis of the endogenous circadian clock. The protein is Two-component response regulator-like APRR9 (APRR9) of Arabidopsis thaliana (Mouse-ear cress).